A 261-amino-acid chain; its full sequence is Hemin import ATP-binding protein HmuV (261 aa).

One can recognise an ABC transporter domain in the interval 7-243 (LRGQNLSLQF…EIIDAVYGYK (237 aa)). An ATP-binding site is contributed by 39 to 46 (GPNGAGKS).

The protein belongs to the ABC transporter superfamily. Heme (hemin) importer (TC 3.A.1.14.5) family. The complex is composed of two ATP-binding proteins (HmuV), two transmembrane proteins (HmuU) and a solute-binding protein (HmuT).

The protein localises to the cell inner membrane. Functionally, part of the ABC transporter complex HmuTUV involved in hemin import. Responsible for energy coupling to the transport system. In Vibrio vulnificus (strain CMCP6), this protein is Hemin import ATP-binding protein HmuV.